The following is a 128-amino-acid chain: Ribonuclease pancreatic (128 aa).

Residues lysine 1–tyrosine 25 are disordered. Lysine 7 and arginine 10 together coordinate substrate. The Proton acceptor role is filled by histidine 12. Residues aspartate 14 to tyrosine 25 show a composition bias toward polar residues. Cystine bridges form between cysteine 26–cysteine 84, cysteine 40–cysteine 95, cysteine 58–cysteine 110, and cysteine 65–cysteine 72. N-linked (GlcNAc...) asparagine glycosylation occurs at asparagine 34. Substrate-binding positions include lysine 41–threonine 45, lysine 66, and arginine 85. Histidine 119 (proton donor) is an active-site residue.

This sequence belongs to the pancreatic ribonuclease family. Monomer. Interacts with and forms tight 1:1 complexes with RNH1. Dimerization of two such complexes may occur. Interaction with RNH1 inhibits this protein. As to expression, pancreas.

It is found in the secreted. The enzyme catalyses an [RNA] containing cytidine + H2O = an [RNA]-3'-cytidine-3'-phosphate + a 5'-hydroxy-ribonucleotide-3'-[RNA].. It catalyses the reaction an [RNA] containing uridine + H2O = an [RNA]-3'-uridine-3'-phosphate + a 5'-hydroxy-ribonucleotide-3'-[RNA].. Its function is as follows. Endonuclease that catalyzes the cleavage of RNA on the 3' side of pyrimidine nucleotides. Acts on single-stranded and double-stranded RNA. The protein is Ribonuclease pancreatic (RNASE1) of Proechimys guairae (Guaira spiny rat).